A 495-amino-acid chain; its full sequence is UPF0371 protein CE2832 (495 aa).

Belongs to the UPF0371 family.

The protein is UPF0371 protein CE2832 of Corynebacterium efficiens (strain DSM 44549 / YS-314 / AJ 12310 / JCM 11189 / NBRC 100395).